The chain runs to 1019 residues: Limulus clotting factor C (1019 aa).

Positions 1-25 (MVLASFLVSGLVLGLLAQKMRPVQS) are cleaved as a signal peptide. An EGF-like domain is found at 102–137 (YGTWCSGECQCKNGGICDQRTGACACRDRYEGVHCE). Intrachain disulfides connect cysteine 106-cysteine 118, cysteine 112-cysteine 125, cysteine 127-cysteine 136, cysteine 142-cysteine 182, cysteine 168-cysteine 195, cysteine 199-cysteine 241, cysteine 227-cysteine 254, cysteine 260-cysteine 308, cysteine 294-cysteine 321, cysteine 331-cysteine 350, cysteine 354-cysteine 374, cysteine 436-cysteine 447, cysteine 464-cysteine 564, cysteine 538-cysteine 556, cysteine 576-cysteine 621, cysteine 607-cysteine 634, and cysteine 720-cysteine 748. Sushi domains are found at residues 140–197 (KGCP…KCIR), 198–256 (ECAM…QCKN), and 258–323 (VFCP…SCVK). The 97-residue stretch at 325–421 (ADREVDCDSK…EELKSLARSF (97 aa)) folds into the LCCL domain. Residues 436–568 (CPDGWFEVDE…PSSFACMMDL (133 aa)) enclose the C-type lectin domain. 2 N-linked (GlcNAc...) asparagine glycosylation sites follow: asparagine 523 and asparagine 534. 2 consecutive Sushi domains span residues 574–636 (AKCD…RCIK) and 689–750 (PRSS…SCIP). N-linked (GlcNAc...) asparagine glycosylation is found at asparagine 624, asparagine 740, and asparagine 767. The Peptidase S1 domain maps to 763-1019 (IWNGNSTEIG…VFLSWIRQFI (257 aa)). An intrachain disulfide couples cysteine 794 to cysteine 810. Active-site charge relay system residues include histidine 809 and aspartate 865. N-linked (GlcNAc...) asparagine glycosylation is present at asparagine 912. A disulfide bridge connects residues cysteine 932 and cysteine 951. Aspartate 960 is a substrate binding site. Cysteine 962 and cysteine 996 are oxidised to a cystine. The active-site Charge relay system is the serine 966.

The protein belongs to the peptidase S1 family. Heterodimer of a light chain and a heavy chain linked by a disulfide bond.

It localises to the secreted. The enzyme catalyses Selective cleavage of 103-Arg-|-Ser-104 and 124-Ile-|-Ile-125 bonds in Limulus clotting factor B to form activated factor B. Cleavage of -Pro-Arg-|-Xaa- bonds in synthetic substrates.. With respect to regulation, activated by Gram-negative bacterial lipopolysaccharides and chymotrypsin. Functionally, this enzyme is closely associated with an endotoxin-sensitive hemolymph coagulation system which may play important roles in both hemostasis and host defense mechanisms. Its active form catalyzes the activation of factor B. In Carcinoscorpius rotundicauda (Mangrove horseshoe crab), this protein is Limulus clotting factor C.